Reading from the N-terminus, the 391-residue chain is Na(+)/H(+) antiporter NhaA (391 aa).

11 helical membrane passes run 14–34, 59–79, 95–115, 124–144, 154–174, 177–197, 213–233, 261–281, 290–310, 328–348, and 363–383; these read AGGILLLVAVVFAMLMANSPL, LLLWINDGLMALFFLLIGLEV, SLPSFAAIGGMLVPAGIYLLF, AGWAIPAATDIAFALGIMALL, VFLLALAIIDDLGVIVIIALF, SDLSTISLAIASVAILGLVGL, LILWVAVLKSGVHATLAGVII, FLILPVFAFANAGVALGNMSL, IGIALGLILGKPIGVMLFSFI, IAPVAAMCGIGFTMSMFIASL, and LGTLIGSFIAALVGYFWLSKV.

Belongs to the NhaA Na(+)/H(+) (TC 2.A.33) antiporter family.

It localises to the cell inner membrane. It carries out the reaction Na(+)(in) + 2 H(+)(out) = Na(+)(out) + 2 H(+)(in). Functionally, na(+)/H(+) antiporter that extrudes sodium in exchange for external protons. This is Na(+)/H(+) antiporter NhaA from Shewanella putrefaciens (strain CN-32 / ATCC BAA-453).